Here is a 201-residue protein sequence, read N- to C-terminus: Small ribosomal subunit protein uS4 (201 aa).

An S4 RNA-binding domain is found at 93 to 153; it reads QRLDNIVYRL…EKSKNLVIIK (61 aa).

This sequence belongs to the universal ribosomal protein uS4 family. In terms of assembly, part of the 30S ribosomal subunit. Contacts protein S5. The interaction surface between S4 and S5 is involved in control of translational fidelity.

Functionally, one of the primary rRNA binding proteins, it binds directly to 16S rRNA where it nucleates assembly of the body of the 30S subunit. With S5 and S12 plays an important role in translational accuracy. The polypeptide is Small ribosomal subunit protein uS4 (Latilactobacillus sakei subsp. sakei (strain 23K) (Lactobacillus sakei subsp. sakei)).